The following is a 294-amino-acid chain: Probable endonuclease 4 (294 aa).

Zn(2+) is bound by residues His71, His111, Glu148, Asp182, His185, His217, Asp230, His232, and Glu262.

The protein belongs to the AP endonuclease 2 family. Requires Zn(2+) as cofactor.

It carries out the reaction Endonucleolytic cleavage to 5'-phosphooligonucleotide end-products.. Its function is as follows. Endonuclease IV plays a role in DNA repair. It cleaves phosphodiester bonds at apurinic or apyrimidinic (AP) sites, generating a 3'-hydroxyl group and a 5'-terminal sugar phosphate. The protein is Probable endonuclease 4 of Acholeplasma laidlawii (strain PG-8A).